The chain runs to 608 residues: Isocitrate dehydrogenase kinase/phosphatase (608 aa).

ATP contacts are provided by residues 328–334 and Lys349; that span reads APGIKGL. Asp384 is a catalytic residue.

The protein belongs to the AceK family.

The protein resides in the cytoplasm. It carries out the reaction L-seryl-[isocitrate dehydrogenase] + ATP = O-phospho-L-seryl-[isocitrate dehydrogenase] + ADP + H(+). Bifunctional enzyme which can phosphorylate or dephosphorylate isocitrate dehydrogenase (IDH) on a specific serine residue. This is a regulatory mechanism which enables bacteria to bypass the Krebs cycle via the glyoxylate shunt in response to the source of carbon. When bacteria are grown on glucose, IDH is fully active and unphosphorylated, but when grown on acetate or ethanol, the activity of IDH declines drastically concomitant with its phosphorylation. The protein is Isocitrate dehydrogenase kinase/phosphatase of Cupriavidus pinatubonensis (strain JMP 134 / LMG 1197) (Cupriavidus necator (strain JMP 134)).